Reading from the N-terminus, the 687-residue chain is Polyphosphate kinase (687 aa).

An ATP-binding site is contributed by N45. Residues R373 and R403 each contribute to the Mg(2+) site. H433 (phosphohistidine intermediate) is an active-site residue. Residues Y466, R562, and H590 each coordinate ATP. The PLD phosphodiesterase domain occupies 585–615 (DRFLEHDRVYVFENKGDKLVYLSSADWMTRN).

Belongs to the polyphosphate kinase 1 (PPK1) family. Requires Mg(2+) as cofactor. Post-translationally, an intermediate of this reaction is the autophosphorylated ppk in which a phosphate is covalently linked to a histidine residue through a N-P bond.

The enzyme catalyses [phosphate](n) + ATP = [phosphate](n+1) + ADP. In terms of biological role, catalyzes the reversible transfer of the terminal phosphate of ATP to form a long-chain polyphosphate (polyP). This Yersinia pestis protein is Polyphosphate kinase.